The sequence spans 208 residues: Putative 3-methyladenine DNA glycosylase (208 aa).

The tract at residues 1-20 (MGRAHTVSRGEDHPPIARSE) is disordered.

This sequence belongs to the DNA glycosylase MPG family.

In Mesorhizobium japonicum (strain LMG 29417 / CECT 9101 / MAFF 303099) (Mesorhizobium loti (strain MAFF 303099)), this protein is Putative 3-methyladenine DNA glycosylase.